Here is a 124-residue protein sequence, read N- to C-terminus: MAITKDDILEAVGAMSVMELNDLVKAFEEKFGVSAAAMAVAAAPGAGGAAAAEEQTEFNVILAEVGANKVGVIKAVREITGLGLKEAKDLVDGAPKAVKEGVDKAAAAEAKKKLEDAGAKVDVK.

Belongs to the bacterial ribosomal protein bL12 family. Homodimer. Part of the ribosomal stalk of the 50S ribosomal subunit. Forms a multimeric L10(L12)X complex, where L10 forms an elongated spine to which 2 to 4 L12 dimers bind in a sequential fashion. Binds GTP-bound translation factors.

Functionally, forms part of the ribosomal stalk which helps the ribosome interact with GTP-bound translation factors. Is thus essential for accurate translation. The chain is Large ribosomal subunit protein bL12 from Cupriavidus pinatubonensis (strain JMP 134 / LMG 1197) (Cupriavidus necator (strain JMP 134)).